A 281-amino-acid polypeptide reads, in one-letter code: 4-diphosphocytidyl-2-C-methyl-D-erythritol kinase (281 aa).

Residue lysine 15 is part of the active site. 98–108 serves as a coordination point for ATP; that stretch reads PTGAGLGGGSS. The active site involves aspartate 140.

Belongs to the GHMP kinase family. IspE subfamily.

It carries out the reaction 4-CDP-2-C-methyl-D-erythritol + ATP = 4-CDP-2-C-methyl-D-erythritol 2-phosphate + ADP + H(+). It functions in the pathway isoprenoid biosynthesis; isopentenyl diphosphate biosynthesis via DXP pathway; isopentenyl diphosphate from 1-deoxy-D-xylulose 5-phosphate: step 3/6. Functionally, catalyzes the phosphorylation of the position 2 hydroxy group of 4-diphosphocytidyl-2C-methyl-D-erythritol. In Neisseria gonorrhoeae (strain NCCP11945), this protein is 4-diphosphocytidyl-2-C-methyl-D-erythritol kinase.